Consider the following 131-residue polypeptide: Large ribosomal subunit protein bL17 (131 aa).

It belongs to the bacterial ribosomal protein bL17 family. In terms of assembly, part of the 50S ribosomal subunit. Contacts protein L32.

This is Large ribosomal subunit protein bL17 from Burkholderia ambifaria (strain MC40-6).